We begin with the raw amino-acid sequence, 385 residues long: tRNA (guanine-N(7)-)-methyltransferase non-catalytic subunit wuho (385 aa).

WD repeat units lie at residues 68 to 108 (KVEV…AKLL), 155 to 194 (GHLS…DIHS), and 198 to 236 (GHKE…ELLH).

It belongs to the WD repeat TRM82 family. In terms of assembly, forms a heterodimer with the catalytic subunit Mettl1. Interacts with mei-P26 and weakly interacts with bgcn; required for the function or formation of the mei-P26-bgcn-bam-sxl complex. Interacts with nanos; may be involved in mei-P26-dependent derepression of the BMP signaling pathway. Interacts with Myc; the interaction may be mediated by mei-P26 and may be involved in the regulation of ribosome biogenesis. In testis, it is present at high level in hub cells, a niche for germline stem cells of testis. Ubiquitously expressed in all testicular cells throughout spermatogenesis. Ubiquitously expressed in all germline and somatic cells of the ovary.

It localises to the nucleus. The protein localises to the cytoplasm. It participates in tRNA modification; N(7)-methylguanine-tRNA biosynthesis. Its function is as follows. Required for the Mettl1-dependent formation of N(7)-methylguanine at position 46 (m7G46) in tRNA. In the Mettl1-wuho methyltransferase complex, it is required to stabilize and induce conformational changes of the catalytic subunit. Required for binding of nanos mRNA and repression of translation by the mei-P26-bgcn-bam-sxl complex. May cooperate with mei-P26 and nanos to derepress the BMP signaling pathway. May cooperate with mei-P26 to suppress expression of a subset of microRNAs. May cooperate with mei-P26 to regulate bam expression levels in germline cells during gametogenesis. Required to promote mitosis to meiosis transition during gametogenesis. May regulate germline cell division in part by regulating ribosome biogenesis. This Drosophila grimshawi (Hawaiian fruit fly) protein is tRNA (guanine-N(7)-)-methyltransferase non-catalytic subunit wuho.